Consider the following 218-residue polypeptide: MTGISLALKPRQVFGNKNKLIRAQGLTPVHIFGHGLKSLALQADTLELESTINRAGSSHLVNIKLDTDKKTRKVFIREIQRNPIKGYLEHVDFYQINLKEKVTAEIPIHFSGESSLLKEKGHKLIAPFTHLTVEALPDDLPPEIHIDLSQFDTLEKDLYIKDIILPGGAKILNEADLLVAKVSEVHLKVETTVAVNPAEESGEKPVAHIEEKESTEKE.

A disordered region spans residues 197 to 218 (PAEESGEKPVAHIEEKESTEKE). Positions 201 to 218 (SGEKPVAHIEEKESTEKE) are enriched in basic and acidic residues.

Belongs to the bacterial ribosomal protein bL25 family. CTC subfamily. Part of the 50S ribosomal subunit; part of the 5S rRNA/L5/L18/L25 subcomplex. Contacts the 5S rRNA. Binds to the 5S rRNA independently of L5 and L18.

Functionally, this is one of the proteins that binds to the 5S RNA in the ribosome where it forms part of the central protuberance. This chain is Large ribosomal subunit protein bL25, found in Dehalococcoides mccartyi (strain ATCC BAA-2100 / JCM 16839 / KCTC 5957 / BAV1).